The chain runs to 492 residues: Polyamine oxidase 5 (492 aa).

E55, R63, V244, and E431 together coordinate FAD. Residues 490 to 492 carry the Microbody targeting signal motif; the sequence is SRL.

This sequence belongs to the flavin monoamine oxidase family. It depends on FAD as a cofactor. In terms of tissue distribution, widely expressed.

It is found in the peroxisome. It catalyses the reaction spermine + O2 + H2O = 3-aminopropanal + spermidine + H2O2. The catalysed reaction is norspermine + O2 + H2O = norspermidine + 3-aminopropanal + H2O2. It carries out the reaction thermospermine + O2 + H2O = 3-aminopropanal + spermidine + H2O2. It participates in amine and polyamine degradation; spermine degradation. In terms of biological role, flavoenzyme involved in polyamine back-conversion. Catalyzes the oxidation of the secondary amino group of polyamines, such as spermine. Substrate preference is spermine &gt; thermospermine &gt; norspermine. No activity detected when putrescine, spermidine or N(1)-acetylspermidine are used as substrates. Plays an important role in the regulation of polyamine intracellular concentration. May play a role in producing hydrogen peroxide during seed germination. The chain is Polyamine oxidase 5 from Oryza sativa subsp. japonica (Rice).